The chain runs to 738 residues: Outer membrane protein assembly factor BamA (738 aa).

A signal peptide spans 1–13; it reads MVWLLFLSSFCFA. 5 consecutive POTRA domains span residues 14-81, 82-159, 162-248, 251-329, and 332-404; these read DEVV…LQEN, PILR…VKEA, TVIR…LKEG, YSFG…VVST, and YRIR…VKER.

It belongs to the BamA family. As to quaternary structure, part of the Bam complex.

Its subcellular location is the cell outer membrane. Part of the outer membrane protein assembly complex, which is involved in assembly and insertion of beta-barrel proteins into the outer membrane. The polypeptide is Outer membrane protein assembly factor BamA (Neorickettsia risticii (strain Illinois)).